The primary structure comprises 201 residues: MATAVAGPEIERLIQLLARLPGLGPRSARRAALHLIKKRDALMTPLASALQVAIDKIEVCKSCGNIDTRNPCTVCTDPRRDPSIIVVVADVADLWALERASATNGRYHVLGATLSPLDGVGPDDLTIDALVARAHDPAVSEIILALNATVDGQTTAHYVTDLLQEAGVKVTRLAHGVPVGGELDYLDEGTLSAAMRQRTLF.

Residues Cys-60–Cys-75 form a C4-type zinc finger. In terms of domain architecture, Toprim spans Ser-83–Pro-178.

It belongs to the RecR family.

In terms of biological role, may play a role in DNA repair. It seems to be involved in an RecBC-independent recombinational process of DNA repair. It may act with RecF and RecO. This is Recombination protein RecR from Rhodopseudomonas palustris (strain BisB5).